A 623-amino-acid chain; its full sequence is C2H2-type transcription factor zfpA (623 aa).

The span at 202 to 219 shows a compositional bias: polar residues; sequence GLAVSSPMPNSGPHSRSV. 2 disordered regions span residues 202-256 and 468-493; these read GLAV…EKGR and SNKA…NGKA. Positions 227–239 are enriched in low complexity; the sequence is SISSTNSRRSQLS. Residues 255 to 276 form a C2H2-type zinc finger; the sequence is GRCPHPDCGRVFKDLKAHMLTH.

Its subcellular location is the nucleus. Functionally, transcription factor involved in fungal growth and virulence potential. Negatively regulates antifungal drug susceptibility via transcriptional inhibition of the expressions of drug efflux pumps in a crzA-dependent way. Under the treatment of azoles, both zfpA and crzA transfer to nuclei and coregulate the expression of multidrug transporters and then keep normal drug susceptibility in fungal cells. This is C2H2-type transcription factor zfpA from Aspergillus fumigatus (strain CBS 144.89 / FGSC A1163 / CEA10) (Neosartorya fumigata).